The chain runs to 252 residues: MCYNKSMTKVNEERVQEIFNSISSDYDKMNAIISFKQHDLWRAKTMKRMGDLTGLSILDLCCGTGDWTFDLSESVGPSGKVIGLDFSENMLEIAKAKLKEEAKKNIEFLQGNAMALPFEKGSFDVVTIGYGLRNTPDYLTVLKEIFRVLKPGGRVVCIETSHPTLPIYKQAFELYFKNVMPFLGKVFAKSLKEYQWLQKSAEDFPDAKTLEELFRKAGFVAVEYQKHGGGAIASHFATKSQKPKSNIRIGKK.

S-adenosyl-L-methionine is bound by residues threonine 64, aspartate 85, and 112–113; that span reads NA.

This sequence belongs to the class I-like SAM-binding methyltransferase superfamily. MenG/UbiE family.

It catalyses the reaction a 2-demethylmenaquinol + S-adenosyl-L-methionine = a menaquinol + S-adenosyl-L-homocysteine + H(+). It functions in the pathway quinol/quinone metabolism; menaquinone biosynthesis; menaquinol from 1,4-dihydroxy-2-naphthoate: step 2/2. Its function is as follows. Methyltransferase required for the conversion of demethylmenaquinol (DMKH2) to menaquinol (MKH2). This is Demethylmenaquinone methyltransferase from Lactococcus lactis subsp. lactis (strain IL1403) (Streptococcus lactis).